Reading from the N-terminus, the 449-residue chain is MVNFNSAVNILEVVQVSPPSSNSLTLPLTYFDLGWLKLHPVDRVLFYHVPELTRSSLISKLKSSLSATLLHYLPLAGRLVWDSIKTKPSIVYSPDDKDAVYLTVAESNGDLSHLSGDEPRPATEFHSLVPELPVSDESARVLAVQVTFFPNQGFSLGVTAHHAVLDGKTTAMFLKAWAHNCKQEQEALPHDLVPSLDRIIVQDPTGLETKLLNRWISASNNKPSLKLFPSKIIGSDILRVTYRLTREDIKKLRERVETESHAKQLRLSTFVITYAYVITCMVKMRGGDPTRFVCVGFASDFRSRLNPPLPPTFFGNCIVGSGDFDVKAEPILEEGEGKGFITAVETLTGWVNGLCPENIEKNMLLPFEAFKRMEPGRQMISVAGSTRLGIYGSDFGWGKPVKVEIVTIDKDASVSLSESGDGSGGVEVGVCLKKDDVERFGSLFSIGLE.

Met-1 is modified (N-acetylmethionine). Active-site proton acceptor residues include His-162 and Asp-394.

Belongs to the plant acyltransferase family. Expressed in flowers. Detected in leaves, stems, roots and siliques.

The catalysed reaction is anthocyanin A3 + malonyl-CoA = anthocyanin A5 + CoA. It carries out the reaction anthocyanin A7 + malonyl-CoA = anthocyanin A9 + CoA. The enzyme catalyses anthocyanin A6 + malonyl-CoA = anthocyanin A8 + CoA. It catalyses the reaction anthocyanin A10 + malonyl-CoA = anthocyanin A11 + CoA. Catalyzes the malonylation of the 5-O-glucose residue of anthocyanins, using malonyl-CoA as the malonyl donor. Acts only on anthocyanin substrates containing a 5-O-glucosyl moiety. Acts on the four native A.thaliana anthocyanins, A3, A7, and to a lesser extent, A6 and A10. Can also use the non-native anthocyanin compounds cyanin (cyanidin 3,5-diglucoside), malvin, pelargonidin 3,5-diglucoside, peonidin 3,5-diglucoside, cyanidin 3-coumaroylglucoside 5-glucoside, delphinidin 3-coumaroylrutinoside 5-glucoside and petunidin 3-coumaroylrutinoside 5-glucoside as substrates. Is the sole enzyme responsible for producing malonylated anthocyanin 5-O-glucosides in A.thaliana. Is not able to catalyze acyl transfer using acetyl-CoA, butyryl-CoA, hexanoyl-CoA, benzoyl-CoA, cinnamoyl-CoA, methylmalonyl-CoA, succinyl-CoA, p-coumaroyl-CoA or caffeoyl-CoA. The protein is Malonyl-CoA:anthocyanidin 5-O-glucoside-6''-O-malonyltransferase (5MAT) of Arabidopsis thaliana (Mouse-ear cress).